A 200-amino-acid chain; its full sequence is 3-isopropylmalate dehydratase small subunit (200 aa).

This sequence belongs to the LeuD family. LeuD type 1 subfamily. In terms of assembly, heterodimer of LeuC and LeuD.

The enzyme catalyses (2R,3S)-3-isopropylmalate = (2S)-2-isopropylmalate. Its pathway is amino-acid biosynthesis; L-leucine biosynthesis; L-leucine from 3-methyl-2-oxobutanoate: step 2/4. Functionally, catalyzes the isomerization between 2-isopropylmalate and 3-isopropylmalate, via the formation of 2-isopropylmaleate. The protein is 3-isopropylmalate dehydratase small subunit of Photobacterium profundum (strain SS9).